The chain runs to 364 residues: Fructose-bisphosphate aldolase A (364 aa).

T9 bears the Phosphothreonine mark. S36 and S39 each carry phosphoserine. The residue at position 42 (K42) is an N6-acetyllysine; alternate. Residue K42 forms a Glycyl lysine isopeptide (Lys-Gly) (interchain with G-Cter in SUMO1); alternate linkage. Residue K42 forms a Glycyl lysine isopeptide (Lys-Gly) (interchain with G-Cter in SUMO2); alternate linkage. Beta-D-fructose 1,6-bisphosphate is bound at residue R43. S46 is subject to Phosphoserine. The residue at position 99 (K99) is an N6-(2-hydroxyisobutyryl)lysine. K108 is subject to N6-acetyllysine. Position 111 is an N6-acetyllysine; alternate (K111). K111 carries the N6-malonyllysine; alternate modification. S132 is modified (phosphoserine). Position 147 is an N6-(2-hydroxyisobutyryl)lysine (K147). E188 serves as the catalytic Proton acceptor. The Schiff-base intermediate with dihydroxyacetone-P role is filled by K230. Residue S272 is modified to Phosphoserine. Residues 272 to 274 (SGG), S301, and R304 each bind beta-D-fructose 1,6-bisphosphate. K312 bears the N6-malonyllysine mark. Position 330 is an N6-acetyllysine (K330). N361 carries the post-translational modification Deamidated asparagine; in form beta.

It belongs to the class I fructose-bisphosphate aldolase family. As to quaternary structure, homotetramer. Interacts with SNX9 and WAS. Interacts with FBP2; the interaction blocks FBP2 inhibition by physiological concentrations of AMP and reduces inhibition by Ca(2+). In terms of processing, asn-361 in form alpha is deaminated to Asp in form beta.

The protein resides in the cytoplasm. It localises to the myofibril. Its subcellular location is the sarcomere. It is found in the i band. The protein localises to the m line. The catalysed reaction is beta-D-fructose 1,6-bisphosphate = D-glyceraldehyde 3-phosphate + dihydroxyacetone phosphate. Its pathway is carbohydrate degradation; glycolysis; D-glyceraldehyde 3-phosphate and glycerone phosphate from D-glucose: step 4/4. Functionally, plays a key role in glycolysis and gluconeogenesis. In addition, may also function as scaffolding protein. This is Fructose-bisphosphate aldolase A (ALDOA) from Oryctolagus cuniculus (Rabbit).